Reading from the N-terminus, the 231-residue chain is 7-cyano-7-deazaguanine synthase (231 aa).

Residue 8-18 (FSGGQDSTTCL) participates in ATP binding. 4 residues coordinate Zn(2+): C187, C196, C199, and C202.

Belongs to the QueC family. Zn(2+) is required as a cofactor.

It carries out the reaction 7-carboxy-7-deazaguanine + NH4(+) + ATP = 7-cyano-7-deazaguanine + ADP + phosphate + H2O + H(+). The protein operates within purine metabolism; 7-cyano-7-deazaguanine biosynthesis. Functionally, catalyzes the ATP-dependent conversion of 7-carboxy-7-deazaguanine (CDG) to 7-cyano-7-deazaguanine (preQ(0)). The polypeptide is 7-cyano-7-deazaguanine synthase (Vibrio vulnificus (strain CMCP6)).